Reading from the N-terminus, the 834-residue chain is Periplasmic nitrate reductase (834 aa).

A signal peptide (tat-type signal) is located at residues 1–29 (MNLTRREFAKANAAAIAAAAAGLPILVRA). Residues 41 to 97 (LVWNKAPCRFCGTGCSVMVATRDGQVVATHGDIKAEVNRGINCVKGYFLSKIMYGSD) enclose the 4Fe-4S Mo/W bis-MGD-type domain. Positions 48, 51, 55, and 83 each coordinate [4Fe-4S] cluster. Residues lysine 85, glutamine 152, asparagine 177, cysteine 181, 214–221 (WGSNMAEM), 245–249 (STFEH), 264–266 (QTD), methionine 375, glutamine 379, asparagine 485, 511–512 (SD), lysine 534, aspartate 561, and 721–730 (TGRVLEHWHT) contribute to the Mo-bis(molybdopterin guanine dinucleotide) site. Phenylalanine 797 contacts substrate. Mo-bis(molybdopterin guanine dinucleotide)-binding residues include asparagine 805 and lysine 822.

Belongs to the prokaryotic molybdopterin-containing oxidoreductase family. NasA/NapA/NarB subfamily. In terms of assembly, component of the periplasmic nitrate reductase NapAB complex composed of NapA and NapB. [4Fe-4S] cluster is required as a cofactor. Mo-bis(molybdopterin guanine dinucleotide) serves as cofactor. In terms of processing, predicted to be exported by the Tat system. The position of the signal peptide cleavage has not been experimentally proven.

Its subcellular location is the periplasm. It carries out the reaction 2 Fe(II)-[cytochrome] + nitrate + 2 H(+) = 2 Fe(III)-[cytochrome] + nitrite + H2O. In terms of biological role, catalytic subunit of the periplasmic nitrate reductase complex NapAB. Receives electrons from NapB and catalyzes the reduction of nitrate to nitrite. The chain is Periplasmic nitrate reductase from Pseudomonas aeruginosa (strain UCBPP-PA14).